The following is a 305-amino-acid chain: Putative S-adenosyl-L-methionine-dependent methyltransferase Mvan_1344 (305 aa).

S-adenosyl-L-methionine is bound by residues Asp130 and 159 to 160 (DL).

It belongs to the UPF0677 family.

Functionally, exhibits S-adenosyl-L-methionine-dependent methyltransferase activity. The protein is Putative S-adenosyl-L-methionine-dependent methyltransferase Mvan_1344 of Mycolicibacterium vanbaalenii (strain DSM 7251 / JCM 13017 / BCRC 16820 / KCTC 9966 / NRRL B-24157 / PYR-1) (Mycobacterium vanbaalenii).